A 517-amino-acid polypeptide reads, in one-letter code: Enantioselective amidase (517 aa).

Residues lysine 96 and serine 173 each act as charge relay system in the active site. Serine 197 functions as the Acyl-ester intermediate in the catalytic mechanism.

The protein belongs to the amidase family. Homooctamer.

It catalyses the reaction a monocarboxylic acid amide + H2O = a monocarboxylate + NH4(+). The protein is Enantioselective amidase (amdA) of Rhodococcus rhodochrous.